A 905-amino-acid chain; its full sequence is NADH-quinone oxidoreductase subunit G (905 aa).

The 2Fe-2S ferredoxin-type domain maps to 1–83 (MATIHVDGKT…NTWISIEDEE (83 aa)). Residues cysteine 34, cysteine 45, cysteine 48, and cysteine 67 each coordinate [2Fe-2S] cluster. Residues 83 to 122 (EAKQFRASVVEWLMTNHPHDCPVCEEGGHCHLQDMTVMTG) enclose the 4Fe-4S His(Cys)3-ligated-type domain. Positions 99, 103, 106, 112, 151, 154, 157, 201, 228, 231, 235, and 263 each coordinate [4Fe-4S] cluster. The 57-residue stretch at 221-277 (MQFAPSICHGCSSGCNISPGERYGEIRRIENRYNGSVNHYFLCDRGRFGYGYVNRED) folds into the 4Fe-4S Mo/W bis-MGD-type domain.

This sequence belongs to the complex I 75 kDa subunit family. In terms of assembly, composed of 13 different subunits. Subunits NuoCD, E, F, and G constitute the peripheral sector of the complex. The cofactor is [2Fe-2S] cluster. It depends on [4Fe-4S] cluster as a cofactor.

It carries out the reaction a quinone + NADH + 5 H(+)(in) = a quinol + NAD(+) + 4 H(+)(out). Functionally, NDH-1 shuttles electrons from NADH, via FMN and iron-sulfur (Fe-S) centers, to quinones in the respiratory chain. The immediate electron acceptor for the enzyme in this species is believed to be ubiquinone. Couples the redox reaction to proton translocation (for every two electrons transferred, four hydrogen ions are translocated across the cytoplasmic membrane), and thus conserves the redox energy in a proton gradient. In Pseudomonas aeruginosa (strain ATCC 15692 / DSM 22644 / CIP 104116 / JCM 14847 / LMG 12228 / 1C / PRS 101 / PAO1), this protein is NADH-quinone oxidoreductase subunit G (nuoG).